The following is a 410-amino-acid chain: Centromere protein U (410 aa).

The segment at 1–72 is disordered; that stretch reads MAARRSLRYS…YETFDPPLHS (72 aa). Residues 4-21 carry the Nuclear localization signal motif; it reads RRSLRYSGDPGAKRSRNT. Residues 28-38 show a composition bias toward basic residues; it reads RKQKAGQKPKR. Phosphothreonine; by PLK1 is present on Thr73. The interval 87–228 is disordered; that stretch reads SSTSPATHRG…THSDASESMH (142 aa). Polar residues predominate over residues 101 to 115; it reads NLNPSENEASGNDSI. Phosphoserine is present on residues Ser105, Ser110, Ser114, Ser130, Ser133, and Ser135. The span at 138-149 shows a compositional bias: basic and acidic residues; the sequence is DNVRRSVSIERP. Positions 158 to 169 are enriched in low complexity; sequence PAAASSSSSPSE. Residue Lys179 forms a Glycyl lysine isopeptide (Lys-Gly) (interchain with G-Cter in SUMO2) linkage. Ser186 carries the post-translational modification Phosphoserine. At Thr191 the chain carries Phosphothreonine. Positions 200–218 are enriched in basic residues; it reads TQKKVRPSPGRRKRPRRGS. Ser224 bears the Phosphoserine mark. Residues 289–352 adopt a coiled-coil conformation; the sequence is QMLKALKRKN…LKNSKHFLSN (64 aa). The Nuclear localization signal motif lies at 295–312; the sequence is KRKNTKIISNMEKKRQRL.

It belongs to the CENP-U/AME1 family. In terms of assembly, component of the CENPA-NAC complex, at least composed of CENPA, CENPC, CENPH, CENPM, CENPN, CENPT and CENPU. The CENPA-NAC complex interacts with the CENPA-CAD complex, composed of CENPI, CENPK, CENPL, CENPO, CENPP, CENPQ, CENPR and CENPS. Interacts with MLF1. Post-translationally, phosphorylated by PLK1 at Thr-73, creating a self-tethering site that specifically interacts with the polo-box domain of PLK1. Expressed at high levels in glioblastoma cell lines. Up-regulated in GBM (glioblastoma multiforme) tumors. Significantly increased in both the tumor core as well as the contralateral striatum and cortex in gliomas.

The protein resides in the cytoplasm. It localises to the nucleus. The protein localises to the chromosome. It is found in the centromere. Its subcellular location is the kinetochore. Component of the CENPA-NAC (nucleosome-associated) complex, a complex that plays a central role in assembly of kinetochore proteins, mitotic progression and chromosome segregation. The CENPA-NAC complex recruits the CENPA-CAD (nucleosome distal) complex and may be involved in incorporation of newly synthesized CENPA into centromeres. Plays an important role in the correct PLK1 localization to the mitotic kinetochores. A scaffold protein responsible for the initial recruitment and maintenance of the kinetochore PLK1 population until its degradation. Involved in transcriptional repression. The chain is Centromere protein U (Cenpu) from Rattus norvegicus (Rat).